The chain runs to 314 residues: Glyceraldehyde-3-phosphate dehydrogenase A, chloroplastic (314 aa).

Residues 5-6 (RI), D29, and R74 each bind NADP(+). A disulfide bond links C13 and C283. D-glyceraldehyde 3-phosphate-binding positions include 147-149 (SCT), T178, R193, 206-207 (TG), and R229. C148 functions as the Nucleophile in the catalytic mechanism. Residue N311 coordinates NADP(+).

Belongs to the glyceraldehyde-3-phosphate dehydrogenase family. In terms of assembly, homotetramer.

Its subcellular location is the plastid. The protein resides in the chloroplast. The catalysed reaction is D-glyceraldehyde 3-phosphate + phosphate + NADP(+) = (2R)-3-phospho-glyceroyl phosphate + NADPH + H(+). The protein operates within carbohydrate biosynthesis; Calvin cycle. This chain is Glyceraldehyde-3-phosphate dehydrogenase A, chloroplastic (GapA), found in Scenedesmus vacuolatus (Green alga).